We begin with the raw amino-acid sequence, 490 residues long: GTPase Der (490 aa).

2 EngA-type G domains span residues 1–165 (MRIA…QIPV) and 227–400 (LKVA…TIAT). GTP is bound by residues 7–14 (GRPNVGKS), 54–58 (DTGGV), 117–120 (NKAD), 233–240 (GHPNVGKS), 280–284 (DTAGL), and 345–348 (NKWD). Residues 401 to 485 (TKLSTSLVNK…PFDLEYKAKP (85 aa)) form the KH-like domain.

This sequence belongs to the TRAFAC class TrmE-Era-EngA-EngB-Septin-like GTPase superfamily. EngA (Der) GTPase family. As to quaternary structure, associates with the 50S ribosomal subunit.

Functionally, GTPase that plays an essential role in the late steps of ribosome biogenesis. The sequence is that of GTPase Der from Chlamydia trachomatis serovar L2b (strain UCH-1/proctitis).